Here is a 246-residue protein sequence, read N- to C-terminus: Ribonuclease PH (246 aa).

Phosphate is bound by residues R91 and 129–131; that span reads GTR.

This sequence belongs to the RNase PH family. As to quaternary structure, homohexameric ring arranged as a trimer of dimers.

The catalysed reaction is tRNA(n+1) + phosphate = tRNA(n) + a ribonucleoside 5'-diphosphate. Its function is as follows. Phosphorolytic 3'-5' exoribonuclease that plays an important role in tRNA 3'-end maturation. Removes nucleotide residues following the 3'-CCA terminus of tRNAs; can also add nucleotides to the ends of RNA molecules by using nucleoside diphosphates as substrates, but this may not be physiologically important. Probably plays a role in initiation of 16S rRNA degradation (leading to ribosome degradation) during starvation. The protein is Ribonuclease PH of Paraburkholderia phytofirmans (strain DSM 17436 / LMG 22146 / PsJN) (Burkholderia phytofirmans).